A 90-amino-acid polypeptide reads, in one-letter code: Small ribosomal subunit protein uS15 (90 aa).

This sequence belongs to the universal ribosomal protein uS15 family. Part of the 30S ribosomal subunit. Forms a bridge to the 50S subunit in the 70S ribosome, contacting the 23S rRNA.

One of the primary rRNA binding proteins, it binds directly to 16S rRNA where it helps nucleate assembly of the platform of the 30S subunit by binding and bridging several RNA helices of the 16S rRNA. Functionally, forms an intersubunit bridge (bridge B4) with the 23S rRNA of the 50S subunit in the ribosome. The polypeptide is Small ribosomal subunit protein uS15 (Helicobacter hepaticus (strain ATCC 51449 / 3B1)).